A 164-amino-acid polypeptide reads, in one-letter code: R-phycoerythrin alpha chain (164 aa).

Residues C82 and C139 each coordinate (2R,3E)-phycoerythrobilin.

The protein belongs to the phycobiliprotein family. In terms of assembly, heterodimer of an alpha and a beta chain. Post-translationally, contains two covalently linked bilin chromophores.

It localises to the plastid. It is found in the chloroplast thylakoid membrane. In terms of biological role, light-harvesting photosynthetic bile pigment-protein from the phycobiliprotein complex. This chain is R-phycoerythrin alpha chain (cpeA), found in Pyropia tenera (Nori).